Here is a 144-residue protein sequence, read N- to C-terminus: Large ribosomal subunit protein uL16 (144 aa).

The span at 1–16 shows a compositional bias: basic residues; the sequence is MLQPKKTKFRRQQKGR. Positions 1–22 are disordered; it reads MLQPKKTKFRRQQKGRMKGEAQ.

It belongs to the universal ribosomal protein uL16 family. Part of the 50S ribosomal subunit.

In terms of biological role, binds 23S rRNA and is also seen to make contacts with the A and possibly P site tRNAs. This Parabacteroides distasonis (strain ATCC 8503 / DSM 20701 / CIP 104284 / JCM 5825 / NCTC 11152) protein is Large ribosomal subunit protein uL16.